The following is a 102-amino-acid chain: Small ribosomal subunit protein uS10 (102 aa).

The protein belongs to the universal ribosomal protein uS10 family. As to quaternary structure, part of the 30S ribosomal subunit.

Functionally, involved in the binding of tRNA to the ribosomes. The protein is Small ribosomal subunit protein uS10 of Trichlorobacter lovleyi (strain ATCC BAA-1151 / DSM 17278 / SZ) (Geobacter lovleyi).